The primary structure comprises 287 residues: MGKQPIDLLMQPSWRIIDQSSLGPYFDAKQSFAMDDTLCASVGKGESPATARSWVHHRTIVLGIQDTRLPFLEDGVKLLEDEGYRVIVRNSGGLAVVLDEGVLNISLIFEDEKKGIDIDRGYEAMTELVRRMLRPHHAEIEAYEIKGSYCPGSYDLSIGGRKFAGISQRRLRGGTAVQIYLCADKSGSERADLIRRFYQAALKDKSNDTKGVYPDIRPETMASLSELLRTDITVQDLMLALLTELKELSGRLYAAGLSPEEEMVFEKNLTRMLERNEKVFGTQESLD.

The 209-residue stretch at 45-253 folds into the BPL/LPL catalytic domain; the sequence is GESPATARSW…ELKELSGRLY (209 aa). Cysteine 150 acts as the Acyl-thioester intermediate in catalysis.

Belongs to the octanoyltransferase LipL family.

It catalyses the reaction N(6)-octanoyl-L-lysyl-[glycine-cleavage complex H protein] + L-lysyl-[lipoyl-carrier protein] = N(6)-octanoyl-L-lysyl-[lipoyl-carrier protein] + L-lysyl-[glycine-cleavage complex H protein]. It functions in the pathway protein modification; protein lipoylation via endogenous pathway; protein N(6)-(lipoyl)lysine from octanoyl-[acyl-carrier-protein]. Catalyzes the amidotransfer (transamidation) of the octanoyl moiety from octanoyl-GcvH to the lipoyl domain of the E2 subunit of lipoate-dependent enzymes. The protein is Octanoyl-[GcvH]:protein N-octanoyltransferase of Bacillus velezensis (strain DSM 23117 / BGSC 10A6 / LMG 26770 / FZB42) (Bacillus amyloliquefaciens subsp. plantarum).